A 361-amino-acid polypeptide reads, in one-letter code: MNQTLAAQFLTRDQVTNFVVHEGNGVKGLSETGIKVLPDQYIQPFEERLINFHVKEDSDESIPVIDISNLDEKSVSKAVCDAAEEWGFFQVINHGVSMEVLENMKTATHRFFGLPVEEKRKFSREKSLSTNVRFGTSFSPHAEKALEWKDYLSLFFVSEAEASQLWPDSCRSETLEYMNETKPLVKKLLRFLGENLNVKELDKTKESFFMGSTRINLNYYPICPNPELTVGVGRHSDVSSLTILLQDEIGGLHVRSLTTGRWVHVPPISGSLVINIGDAMQIMSNGRYKSVEHRVLANGSYNRISVPIFVSPKPESVIGPLLEVIENGEKPVYKDILYTDYVKHFFRKAHDGKKTIDFANI.

The region spanning 211 to 312 (GSTRINLNYY…RISVPIFVSP (102 aa)) is the Fe2OG dioxygenase domain. Tyr220 is a binding site for 2-oxoglutarate. Fe cation contacts are provided by His235, Asp237, and His293. Residues Arg303 and Ser305 each contribute to the 2-oxoglutarate site.

It belongs to the iron/ascorbate-dependent oxidoreductase family. Requires L-ascorbate as cofactor. Fe(2+) is required as a cofactor. In terms of tissue distribution, low expression in roots.

The enzyme catalyses (E)-feruloyl-CoA + 2-oxoglutarate + O2 = (E)-6-hydroxyferuloyl-CoA + succinate + CO2. It carries out the reaction (E)-6-hydroxyferuloyl-CoA = scopoletin + CoA. In terms of biological role, 2-oxoglutarate (OG)- and Fe(II)-dependent dioxygenase (2OGD)involved in scopoletin biosynthesis. Converts feruloyl CoA into 6'-hydroxyferuloyl CoA but has no activity with ferulic acid, feruloylquinic acid, caffeic acid, caffeoyl CoA, p-coumaric acid, cinnamic acid, cinnamoyl CoA or benzoyl CoA. The sequence is that of Feruloyl CoA ortho-hydroxylase 2 from Arabidopsis thaliana (Mouse-ear cress).